The following is a 249-amino-acid chain: Aliphatic sulfonates import ATP-binding protein SsuB 2 (249 aa).

Residues 5-233 enclose the ABC transporter domain; the sequence is LDLLEIRKAY…PRDRRAVELA (229 aa). 37–44 provides a ligand contact to ATP; it reads GPSGCGKS.

Belongs to the ABC transporter superfamily. Aliphatic sulfonates importer (TC 3.A.1.17.2) family. In terms of assembly, the complex is composed of two ATP-binding proteins (SsuB), two transmembrane proteins (SsuC) and a solute-binding protein (SsuA).

Its subcellular location is the cell inner membrane. It catalyses the reaction ATP + H2O + aliphatic sulfonate-[sulfonate-binding protein]Side 1 = ADP + phosphate + aliphatic sulfonateSide 2 + [sulfonate-binding protein]Side 1.. Its function is as follows. Part of the ABC transporter complex SsuABC involved in aliphatic sulfonates import. Responsible for energy coupling to the transport system. This Pseudomonas aeruginosa (strain ATCC 15692 / DSM 22644 / CIP 104116 / JCM 14847 / LMG 12228 / 1C / PRS 101 / PAO1) protein is Aliphatic sulfonates import ATP-binding protein SsuB 2.